The sequence spans 588 residues: MQRALSSRTSVLSAASKRAAFTKPAGLNLQQQRFAHKELKFGVEARAQLLKGVDTLAKAVTSTLGPKGRNVLIESPYGSPKITKDGVTVAKAVQLQDKFENLGARLLQDVASKTNELAGDGTTTATVLARAIFSETVKNVAAGCNPMDLRRGIQAAVEAAVDYLQQNKRDITTGEEIAQVATISANGDTHVGKLISTAMERVGKEGVITVKEGKTLEDELEVTEGMRFDRGYTSPYFITDAKAQKVEFEKPLILLSEKKISAVQDIIPALEASTTLRRPLVIIAEDIEGEALAVCILNKLRGQLQVAAVKAPGFGDNRKSILGDLGVLTNGTVFTDELDIKLEKLTPDMLGSTGSITITKEDTIILNGEGSKDAIAQRCEQIRGVMADPTTSEYEKEKLQERLAKLSGGVAVIKVGGASEVEVGEKKDRVVDALNATRAAVEEGILPGGGTALLKAAANGLENVKPANFDQQLGVSIVKSAITRPARTIVENAGLEGSVIVGKLTDEFSKDFNRGFDSAKGEYVDMIAAGIVDPLKVVRTALVDASGVSSLLGTTEVAIVEAPEEKGPAAPGGMGGMGGMGGMGGGMF.

The N-terminal 34 residues, Met-1 to Phe-34, are a transit peptide targeting the mitochondrion.

It belongs to the chaperonin (HSP60) family.

Its subcellular location is the mitochondrion. Its function is as follows. May participate in assembly and/or disassembly of proteins imported into the mitochondrion. HSP60 are ATPases and have affinity for unfolded proteins. Involved in osmoadaptation. This is Heat shock protein 60 (hsp60) from Emericella nidulans (strain FGSC A4 / ATCC 38163 / CBS 112.46 / NRRL 194 / M139) (Aspergillus nidulans).